The chain runs to 268 residues: Uronate dehydrogenase (268 aa).

NAD(+)-binding positions include 17-18, 37-39, 55-56, and 75-79; these read GL, DIS, DL, and FGGVS. Residues Ser79 and 115–117 contribute to the substrate site; that span reads SNH. Tyr140 acts as the Proton acceptor in catalysis. Lys144 contributes to the NAD(+) binding site. Position 169 (Ser169) interacts with substrate. Ser170 serves as a coordination point for NAD(+). Residue Arg178 coordinates substrate.

It belongs to the NAD(P)-dependent epimerase/dehydratase family. As to quaternary structure, homohexamer.

The catalysed reaction is beta-D-galacturonate + NAD(+) = D-galactaro-1,5-lactone + NADH + H(+). It carries out the reaction beta-D-glucuronate + NAD(+) = D-glucaro-1,5-lactone + NADH + H(+). It functions in the pathway carbohydrate acid metabolism; D-galacturonate degradation via prokaryotic oxidative pathway. Catalyzes the oxidation of beta-D-galacturonate and beta-D-glucuronate to galactarate and D-glucarate, respectively. This chain is Uronate dehydrogenase (udh), found in Pseudomonas putida (strain ATCC 47054 / DSM 6125 / CFBP 8728 / NCIMB 11950 / KT2440).